Reading from the N-terminus, the 236-residue chain is MIKDWLQESNYTVIFTGAGMSTESGLPDFRSANTGLWKQHDPSKIASIDTLNNNVETFIDFYRERVLKVKEYGPHQGHYILAEWEKQGLVHSIVTQNVDGFHQASGSKIVHELHGTLQKLHCQSCGKEYSSKEYVENEYHCDCGGVLRPSIILFGEMLPQEAFQTAFNDAEKADLFVVLGSSLTVSPANQIPLIAKENGAKLVIVNQDPTPYDQYADMTISDQKIGEFLRSISNEG.

The Deacetylase sirtuin-type domain occupies 1–236 (MIKDWLQESN…EFLRSISNEG (236 aa)). Positions 18, 22, 29, 30, 96, 98, 99, and 114 each coordinate NAD(+). Residue Phe-29 coordinates nicotinamide. Nicotinamide is bound by residues Val-98 and Asp-99. His-114 (proton acceptor) is an active-site residue. Zn(2+) is bound by residues Cys-122, Cys-125, Cys-141, and Cys-143. NAD(+) contacts are provided by Ser-181, Ser-182, Asn-206, and Ile-225.

Belongs to the sirtuin family. Class U subfamily. It depends on Zn(2+) as a cofactor.

It localises to the cytoplasm. It carries out the reaction N(6)-acetyl-L-lysyl-[protein] + NAD(+) + H2O = 2''-O-acetyl-ADP-D-ribose + nicotinamide + L-lysyl-[protein]. Its function is as follows. NAD-dependent protein deacetylase which modulates the activities of several enzymes which are inactive in their acetylated form. This chain is NAD-dependent protein deacetylase, found in Oceanobacillus iheyensis (strain DSM 14371 / CIP 107618 / JCM 11309 / KCTC 3954 / HTE831).